A 180-amino-acid polypeptide reads, in one-letter code: Telokin-like protein 20 (180 aa).

The segment at 112 to 180 (SKTDAAVHTS…KQKLDNAKQD (69 aa)) is disordered. A compositionally biased stretch (acidic residues) spans 156 to 165 (DFEENIDDGD).

The chain is Telokin-like protein 20 (TLP20) from Lepidoptera (butterflies and moths).